The primary structure comprises 473 residues: Asparagine--tRNA ligase (473 aa).

This sequence belongs to the class-II aminoacyl-tRNA synthetase family. In terms of assembly, homodimer.

The protein resides in the cytoplasm. It carries out the reaction tRNA(Asn) + L-asparagine + ATP = L-asparaginyl-tRNA(Asn) + AMP + diphosphate + H(+). The sequence is that of Asparagine--tRNA ligase from Treponema denticola (strain ATCC 35405 / DSM 14222 / CIP 103919 / JCM 8153 / KCTC 15104).